Consider the following 239-residue polypeptide: MKEVILDAQARTVGSKGDLAFLRKSGKIPAIFYGKGIKPEAIAVSSKVFVSIMEANGANVIINLNFKDGKKAAIVKSLDRDFLTQHTIHIDFHAISLEDKIEVLVPVHIAGVADGVKNFGGVMEFIVREVKVEAIPRNIPQKISVDVKALRIGQGITVADLPELDGVKYVQDSSTLIVHVIAVAAVFEEEKPEAMAGGTATVVQPEVIISKGKKDKEDEEAEKGTSVASPTTATGGTKK.

Residues 211-239 are disordered; the sequence is KGKKDKEDEEAEKGTSVASPTTATGGTKK. Residues 226-239 are compositionally biased toward polar residues; sequence SVASPTTATGGTKK.

It belongs to the bacterial ribosomal protein bL25 family. CTC subfamily. In terms of assembly, part of the 50S ribosomal subunit; part of the 5S rRNA/L5/L18/L25 subcomplex. Contacts the 5S rRNA. Binds to the 5S rRNA independently of L5 and L18.

Functionally, this is one of the proteins that binds to the 5S RNA in the ribosome where it forms part of the central protuberance. This is Large ribosomal subunit protein bL25 from Endomicrobium trichonymphae.